The chain runs to 500 residues: Na(+)/H(+) antiporter NhaB (500 aa).

12 helical membrane passes run 28 to 50 (FLML…LLVI), 58 to 78 (MALK…ALLL), 96 to 116 (VILL…LLLF), 129 to 149 (ALLA…LDAL), 150 to 170 (TVTA…HRVA), 205 to 225 (LLMH…VGEP), 241 to 261 (FFLK…VTCL), 311 to 331 (ILIA…LMVI), 350 to 370 (FKDA…VAVI), 394 to 414 (MLFI…VATI), 449 to 469 (VATP…IAPL), and 477 to 497 (MVWM…YAVS).

It belongs to the NhaB Na(+)/H(+) (TC 2.A.34) antiporter family.

It is found in the cell inner membrane. The catalysed reaction is 2 Na(+)(in) + 3 H(+)(out) = 2 Na(+)(out) + 3 H(+)(in). Its function is as follows. Na(+)/H(+) antiporter that extrudes sodium in exchange for external protons. This is Na(+)/H(+) antiporter NhaB from Pseudomonas fluorescens (strain Pf0-1).